Reading from the N-terminus, the 502-residue chain is Cytochrome P450 71B16 (502 aa).

A helical transmembrane segment spans residues Met-1–Lys-21. Position 444 (Cys-444) interacts with heme.

The protein belongs to the cytochrome P450 family. It depends on heme as a cofactor.

Its subcellular location is the membrane. This is Cytochrome P450 71B16 (CYP71B16) from Arabidopsis thaliana (Mouse-ear cress).